Consider the following 71-residue polypeptide: Long neurotoxin Tx-NM3-1 (71 aa).

5 disulfide bridges follow: Cys3–Cys20, Cys14–Cys41, Cys26–Cys30, Cys45–Cys56, and Cys57–Cys62.

In terms of tissue distribution, expressed by the venom gland.

It localises to the secreted. Binds with high affinity to muscular (alpha-1-beta-1-gamma-delta/CHRNA1-CHRNB1-CHRNG-CHRND) and neuronal (alpha-7/CHRNA7) nicotinic acetylcholine receptor (nAChR) and inhibits acetylcholine from binding to the receptor, thereby impairing neuromuscular and neuronal transmission. Ranges of nAChR inhibition are in nanomolar (competitive binding with alpha-bungarotoxin gives Ki=1.66 nM on muscle nAChR and Ki=4.84 nM on alpha-7). Also shows moderate inhibition on GABA(A) alpha-1-beta-3-gamma-2 receptor (GABRA1-GABRB3-GABRG2) (IC(50)=0.68 uM), and a lower inhibition on alpha-1-beta-2-gamma-2 (GABRA1-GABRB2-GABRG2) and alpha-3-beta-2-gamma-2 (GABRA3-GABRB2-GABRG2). The protein is Long neurotoxin Tx-NM3-1 of Naja melanoleuca (Forest cobra).